A 658-amino-acid chain; its full sequence is Interferon-induced GTP-binding protein Mx1 (658 aa).

At M1 the chain carries N-acetylmethionine. The tract at residues 1 to 20 is disordered; it reads MVNSKGKITDSDPGSSHLLL. In terms of domain architecture, Dynamin-type G spans 65–338; that stretch reads DLALPAIAVI…LITHICKTLP (274 aa). Residues 75 to 82 are G1 motif; it reads GDQSSGKS. 75-82 lines the GTP pocket; sequence GDQSSGKS. Residues 100–102 are G2 motif; the sequence is VTR. The interval 176–179 is G3 motif; the sequence is DLPG. GTP is bound by residues 176–180 and 245–248; these read DLPGI and TKPD. Residues 245–248 form a G4 motif region; the sequence is TKPD. Residues 277 to 280 form a G5 motif region; it reads KCRG. The segment at 339 to 364 is bundle signaling element (BSE); the sequence is LLENQIKENYEKITEELQKYGSDVPE. The tract at residues 364–531 is middle domain; that stretch reads EEEHEKMFFL…HFQMEQIVYC (168 aa). The stalk stretch occupies residues 365 to 628; the sequence is EEHEKMFFLI…KDTHNWLLKE (264 aa). Residues 551–554 form a critical for lipid-binding region; the sequence is KDRK. Residues 570 to 658 enclose the GED domain; sequence LSDIFEHLLA…ARRRLAKFPG (89 aa).

This sequence belongs to the TRAFAC class dynamin-like GTPase superfamily. Dynamin/Fzo/YdjA family. In terms of assembly, homooligomer. Oligomerizes into multimeric filamentous or ring-like structures by virtue of its stalk domain. Oligomerization is critical for GTPase activity, protein stability, and recognition of viral target structures. Interacts with TRPC1, TRPC3, TRPC4, TRPC5, TRPC6 and TRPC7. Interacts with HSPA5. Interacts with TUBB/TUBB5. Interacts with DDX39A and DDX39B. In terms of processing, ISGylated.

Its subcellular location is the cytoplasm. It is found in the endoplasmic reticulum membrane. The protein resides in the perinuclear region. In terms of biological role, interferon-induced dynamin-like GTPase with antiviral activity. The protein is Interferon-induced GTP-binding protein Mx1 (MX1) of Eumetopias jubatus (Steller sea lion).